Reading from the N-terminus, the 521-residue chain is Citrinin biosynthesis cluster MFS transporter ctnC (521 aa).

The interval 1-29 (MKEEIDAPVSTDASGTDLENARDQPSGEK) is disordered. 8 helical membrane passes run 58 to 78 (SLIT…SSVF), 95 to 115 (VMTL…LVWG), 124 to 144 (LKPL…VAVA), 155 to 175 (FFLG…LADF), 182 to 202 (AIAI…GPIM), 237 to 257 (WTAW…FLTL), 313 to 333 (ILVC…LFFV), and 349 to 369 (GIAA…CLLV). Residue Asn-383 is glycosylated (N-linked (GlcNAc...) asparagine). 4 consecutive transmembrane segments (helical) span residues 392–412 (LPPM…FGWT), 417–437 (ISWA…LMIW), 465–485 (AVSA…GVDW), and 489–509 (LLGF…FYGA).

This sequence belongs to the major facilitator superfamily. CAR1 family.

The protein localises to the membrane. In terms of biological role, MFS transporter; part of the gene cluster that mediates the biosynthesis the mycotoxin citrinin, a hepato-nephrotoxic compound to humans due to inhibition of respiration complex III. The polypeptide is Citrinin biosynthesis cluster MFS transporter ctnC (ctnC) (Monascus purpureus (Red mold)).